The primary structure comprises 99 residues: Pyruvate synthase subunit PorD (99 aa).

4Fe-4S ferredoxin-type domains follow at residues 32 to 60 (MRPI…IQEG) and 61 to 91 (GIMK…MRPE). Residues Cys-41, Cys-44, Cys-47, Cys-51, Cys-71, Cys-74, Cys-77, and Cys-81 each coordinate [4Fe-4S] cluster.

Heterotetramer of one alpha, one beta, one delta and one gamma chain. [4Fe-4S] cluster is required as a cofactor.

This chain is Pyruvate synthase subunit PorD (porD), found in Thermotoga maritima (strain ATCC 43589 / DSM 3109 / JCM 10099 / NBRC 100826 / MSB8).